Consider the following 749-residue polypeptide: Ribosome-releasing factor 2, mitochondrial (749 aa).

The transit peptide at 1 to 22 directs the protein to the mitochondrion; the sequence is MLLLLCNRSVVPRGIRRILRTA. The 279-residue stretch at 44–322 folds into the tr-type G domain; sequence KNIRNIGILA…AVLKYLPAPN (279 aa). Residues 53-60, 117-121, and 171-174 contribute to the GTP site; these read AHIDGGKT, DTPGH, and NKMD.

The protein belongs to the TRAFAC class translation factor GTPase superfamily. Classic translation factor GTPase family. EF-G/EF-2 subfamily.

It localises to the mitochondrion. Mitochondrial GTPase that mediates the disassembly of ribosomes from messenger RNA at the termination of mitochondrial protein biosynthesis. Not involved in the GTP-dependent ribosomal translocation step during translation elongation. The protein is Ribosome-releasing factor 2, mitochondrial of Culex quinquefasciatus (Southern house mosquito).